Consider the following 719-residue polypeptide: DNA ligase (719 aa).

NAD(+) is bound by residues 42–46 (DAEYD), 91–92 (SL), and Glu125. The N6-AMP-lysine intermediate role is filled by Lys127. NAD(+) contacts are provided by Arg148, Glu184, Lys300, and Lys324. The Zn(2+) site is built by Cys429, Cys432, Cys447, and Cys453. One can recognise a BRCT domain in the interval 638–719 (TASSPIAGKT…WLQLIEGSYI (82 aa)).

This sequence belongs to the NAD-dependent DNA ligase family. LigA subfamily. Mg(2+) is required as a cofactor. It depends on Mn(2+) as a cofactor.

The catalysed reaction is NAD(+) + (deoxyribonucleotide)n-3'-hydroxyl + 5'-phospho-(deoxyribonucleotide)m = (deoxyribonucleotide)n+m + AMP + beta-nicotinamide D-nucleotide.. Its function is as follows. DNA ligase that catalyzes the formation of phosphodiester linkages between 5'-phosphoryl and 3'-hydroxyl groups in double-stranded DNA using NAD as a coenzyme and as the energy source for the reaction. It is essential for DNA replication and repair of damaged DNA. This chain is DNA ligase, found in Bartonella quintana (strain Toulouse) (Rochalimaea quintana).